The sequence spans 415 residues: Translation initiation factor 2 subunit gamma (415 aa).

One can recognise a tr-type G domain in the interval 7 to 206; that stretch reads QPEVNIGVVG…GIEEYIKTPY (200 aa). Residues 16-23 are G1; sequence GHVDHGKT. Mg(2+)-binding residues include Asp-19, Thr-23, Gly-44, and Thr-46. Position 19-24 (19-24) interacts with GTP; sequence DHGKTT. Residues 44–48 form a G2 region; it reads GMTIK. Residues Cys-59, Cys-62, Cys-74, and Cys-77 each coordinate Zn(2+). The G3 stretch occupies residues 93–96; the sequence is DAPG. GTP is bound by residues 149 to 152 and 184 to 186; these read NKVD and SAL. Positions 149–152 are G4; sequence NKVD. The segment at 184–186 is G5; it reads SAL.

Belongs to the TRAFAC class translation factor GTPase superfamily. Classic translation factor GTPase family. EIF2G subfamily. Heterotrimer composed of an alpha, a beta and a gamma chain. Mg(2+) is required as a cofactor.

The enzyme catalyses GTP + H2O = GDP + phosphate + H(+). Functionally, eIF-2 functions in the early steps of protein synthesis by forming a ternary complex with GTP and initiator tRNA. The polypeptide is Translation initiation factor 2 subunit gamma (Saccharolobus solfataricus (strain ATCC 35092 / DSM 1617 / JCM 11322 / P2) (Sulfolobus solfataricus)).